The following is a 630-amino-acid chain: Ubiquitin-like modifier-activating enzyme ATG7 (630 aa).

Positions glycine 331–glycine 336 match the GXGXXG motif motif. Catalysis depends on cysteine 507, which acts as the Glycyl thioester intermediate. Residues alanine 591–alanine 630 form a homodimerization region.

Belongs to the ATG7 family. Homodimer; homodimerization is required for ATP-binding. Interacts with ATG8 through a thioester bond between Cys-507 and the C-terminal 'Gly-116' of ATG8 and with ATG12 through a thioester bond between Cys-507 and the C-terminal 'Gly-186' of ATG12. Also interacts with ATG3.

It is found in the cytoplasm. Its subcellular location is the preautophagosomal structure. In terms of biological role, E1-like activating enzyme involved in the 2 ubiquitin-like systems required for cytoplasm to vacuole transport (Cvt) and autophagy. Activates ATG12 for its conjugation with ATG5 and ATG8 for its conjugation with phosphatidylethanolamine. Both systems are needed for the ATG8 association to Cvt vesicles and autophagosomes membranes. Autophagy is essential for maintenance of amino acid levels and protein synthesis under nitrogen starvation. Required for selective autophagic degradation of the nucleus (nucleophagy) as well as for mitophagy which contributes to regulate mitochondrial quantity and quality by eliminating the mitochondria to a basal level to fulfill cellular energy requirements and preventing excess ROS production. Plays a role in the regulation of filamentous growth and chronological longevity. The polypeptide is Ubiquitin-like modifier-activating enzyme ATG7 (ATG7) (Saccharomyces cerevisiae (strain ATCC 204508 / S288c) (Baker's yeast)).